The chain runs to 107 residues: Anti-adapter protein IraM (107 aa).

The protein belongs to the IraM/RssC family.

Its subcellular location is the cytoplasm. In terms of biological role, inhibits RpoS proteolysis by regulating RssB activity, thereby increasing the stability of the sigma stress factor RpoS during magnesium starvation. This is Anti-adapter protein IraM from Shigella sonnei (strain Ss046).